A 520-amino-acid polypeptide reads, in one-letter code: Type I restriction enzyme EcoprrI methylase subunit (520 aa).

S-adenosyl-L-methionine contacts are provided by residues 198-203 (EFFTPQ), 230-232 (SGS), and Glu254.

It belongs to the N(4)/N(6)-methyltransferase family. In terms of assembly, the type I restriction/modification system is composed of three polypeptides R, M and S; the restriction enzyme has stoichiometry R(2)M(2)S(1) while the methyltransferase is M(2)S(1).

The enzyme catalyses a 2'-deoxyadenosine in DNA + S-adenosyl-L-methionine = an N(6)-methyl-2'-deoxyadenosine in DNA + S-adenosyl-L-homocysteine + H(+). Its function is as follows. The subtype gamma methyltransferase (M) subunit of a type I restriction enzyme. The M and S subunits together form a methyltransferase (MTase) that methylates two adenine residues of the sequence 5'-CCAN(7)ATGC-3'. In the presence of the R subunit the complex can also act as an endonuclease, binding to the same target sequence but cutting the DNA some distance from this site. Whether the DNA is cut or modified depends on the methylation state of the target sequence. When the target site is unmodified, the DNA is cut. When the target site is hemimethylated, the complex acts as a maintenance MTase modifying the DNA so that both strands become methylated. After locating a non-methylated recognition site, the enzyme complex serves as a molecular motor that translocates DNA in an ATP-dependent manner until a collision occurs that triggers cleavage. This chain is Type I restriction enzyme EcoprrI methylase subunit, found in Escherichia coli.